Consider the following 161-residue polypeptide: MPSFDVVSEANMIEVKNAIEQSNKEISTRFDFKGSDARVEQKERELTLFADDDFKLGQVKDVLIGKLAKRNVDVRFLDYGKVEKIGGDKLKQIVTVKKGVTGDLAKKIVRLVKDSKIKVQASIQGDAVRVNGTKRDDLQSVIAMLRKDVTDTPLDFNNFRD.

The protein belongs to the YajQ family.

Its function is as follows. Nucleotide-binding protein. In Burkholderia lata (strain ATCC 17760 / DSM 23089 / LMG 22485 / NCIMB 9086 / R18194 / 383), this protein is Nucleotide-binding protein Bcep18194_A5887.